The primary structure comprises 238 residues: Phosphoribosylaminoimidazole-succinocarboxamide synthase (238 aa).

It belongs to the SAICAR synthetase family.

The enzyme catalyses 5-amino-1-(5-phospho-D-ribosyl)imidazole-4-carboxylate + L-aspartate + ATP = (2S)-2-[5-amino-1-(5-phospho-beta-D-ribosyl)imidazole-4-carboxamido]succinate + ADP + phosphate + 2 H(+). It functions in the pathway purine metabolism; IMP biosynthesis via de novo pathway; 5-amino-1-(5-phospho-D-ribosyl)imidazole-4-carboxamide from 5-amino-1-(5-phospho-D-ribosyl)imidazole-4-carboxylate: step 1/2. The sequence is that of Phosphoribosylaminoimidazole-succinocarboxamide synthase from Alcanivorax borkumensis (strain ATCC 700651 / DSM 11573 / NCIMB 13689 / SK2).